Here is a 349-residue protein sequence, read N- to C-terminus: Variable large protein 19 (349 aa).

The first 18 residues, Met-1–Ser-18, serve as a signal peptide directing secretion. Residue Cys-19 is the site of N-palmitoyl cysteine attachment. Cys-19 is lipidated: S-diacylglycerol cysteine.

Belongs to the variable large protein (Vlp) family. Gamma subfamily.

It localises to the cell outer membrane. The Vlp and Vsp proteins are antigenically distinct proteins, only one vlp or vsp gene is transcriptionally active at any one time. Switching between these genes is a mechanism of host immune response evasion. In Borrelia hermsii, this protein is Variable large protein 19.